The sequence spans 495 residues: ATP synthase subunit beta, chloroplastic (495 aa).

Gly172–Thr179 provides a ligand contact to ATP.

It belongs to the ATPase alpha/beta chains family. In terms of assembly, F-type ATPases have 2 components, CF(1) - the catalytic core - and CF(0) - the membrane proton channel. CF(1) has five subunits: alpha(3), beta(3), gamma(1), delta(1), epsilon(1). CF(0) has four main subunits: a(1), b(1), b'(1) and c(9-12).

It localises to the plastid. It is found in the chloroplast thylakoid membrane. The enzyme catalyses ATP + H2O + 4 H(+)(in) = ADP + phosphate + 5 H(+)(out). In terms of biological role, produces ATP from ADP in the presence of a proton gradient across the membrane. The catalytic sites are hosted primarily by the beta subunits. This chain is ATP synthase subunit beta, chloroplastic, found in Eucomis bicolor (King's flower).